We begin with the raw amino-acid sequence, 889 residues long: MSGKSVSFYVSENIDVPLQIKILSLKGKKRQLRASEKLIDPQLSLTMSNVKIFSDMLVSVQVYDELTLGDVTVPVFAPYVPFRYGRNWDQWVTLPVSVRHLTPACKLRIVLWEFNGQRRIPFKTITTPIFKDLDFTLKRGIEAIKFTKQGKPSIETVKTLETINKYFYGDYAKKEWIDELVLKKLYKEYEKIDLPLDTFMLTIQFPVIELPIIYTEKPREDIQKNIPTLSNFDAASAFSVDHSTSNNTAVTSVDPKLKIPMGNKYNSTLKFYDPDQFNNDPIEEKFRKLERASKHNTSDKHVKPDAKKRDYLKKIIDYPPGKRLSAHEKGSIWKYRYYLQNNKKALTKLLQSTNLKDETERTEVLEMMDGWAEIDIDDALGLLGHKYRNLAVRTYAVNRLKKASDKELELYLLQLVQAVCFENLNTFSDTSNSKFTVVDFSSSSQMMKTRNTQRSESQNIMNSHIENNNPKFIHSIHSEDDSQIEELPVVISPLAEFLIRRALVNKRLGNYFYWYITSESYDQPFLNQILESFLSRLNSNDRNEIEKQVKLLTLLRNCCEEIKSLKDTVSKKKELLQTLLSTKVRPYLKKRLVKLPLDPDIVLNDVMIDQCNVFKSSLSPLMITFHTENGGVYPLMYKVGDDLRQDQLVVQIISLMNELLKNENVDLKLLPYTILATGLEEGAIQFIPNLTMADILNKYHGILPFFRAHHPDKDEELGVKSWVIDNFVKSCAGYCVITYLLGVGDRHLDNLLITEGGQFFHADFGYILGQDPKPFPPLMKLPPQIIEAFGGTDSSNYNKFRSYCFVAYSILRRNAGLILNLFELMKTSNIPDIRVDPEGSIMKVKERFNLDLTEEEATIHFQTLINDSVNALLPIVIDHLHNLAQYWRA.

In terms of domain architecture, C2 PI3K-type spans 34-184; sequence ASEKLIDPQL…EWIDELVLKK (151 aa). Residues 298 to 540 enclose the PIK helical domain; that stretch reads SDKHVKPDAK…ESFLSRLNSN (243 aa). Residues 607-873 form the PI3K/PI4K catalytic domain; it reads MIDQCNVFKS…LINDSVNALL (267 aa). The interval 613-619 is G-loop; the sequence is VFKSSLS. A catalytic loop region spans residues 742–750; it reads GVGDRHLDN. The interval 761–782 is activation loop; that stretch reads HADFGYILGQDPKPFPPLMKLP.

Belongs to the PI3/PI4-kinase family. Type III PI4K subfamily. In terms of assembly, component of the autophagy-specific VPS34 PI3-kinase complex I composed of VPS15, VPS30, VPS34, ATG14 and ATG38; and of the VPS34 PI3-kinase complex II composed of VPS15, VPS30, VPS34 and VPS38. Post-translationally, autophosphorylated.

It localises to the golgi apparatus. The protein resides in the trans-Golgi network membrane. The protein localises to the endosome membrane. It catalyses the reaction a 1,2-diacyl-sn-glycero-3-phospho-(1D-myo-inositol) + ATP = a 1,2-diacyl-sn-glycero-3-phospho-(1D-myo-inositol-3-phosphate) + ADP + H(+). Multifunctional phosphatidylinositol 3-kinase that plays a role in signaling in modulation of host immune response, intracellular survival and virulence. Catalytic subunit of the autophagy-specific VPS34 PI3-kinase complex I essential to recruit the ATG8-phosphatidylinositol conjugate and the ATG12-ATG5 conjugate to the pre-autophagosomal structure. Also involved in endosome-to-Golgi retrograde transport as part of the VPS34 PI3-kinase complex II. This second complex is required for the endosome-to-Golgi retrieval of PEP1 and KEX2, and the recruitment of VPS5 and VPS7, two components of the retromer complex, to endosomal membranes (probably through the synthesis of a specific pool of phosphatidylinositol 3-phosphate recruiting the retromer to the endosomes). Finally, it might also be involved in ethanol tolerance and cell wall integrity. The sequence is that of Phosphatidylinositol 3-kinase VPS34 from Candida glabrata (strain ATCC 2001 / BCRC 20586 / JCM 3761 / NBRC 0622 / NRRL Y-65 / CBS 138) (Yeast).